We begin with the raw amino-acid sequence, 173 residues long: Translation initiation factor IF-3 (173 aa).

It belongs to the IF-3 family. Monomer.

Its subcellular location is the cytoplasm. In terms of biological role, IF-3 binds to the 30S ribosomal subunit and shifts the equilibrium between 70S ribosomes and their 50S and 30S subunits in favor of the free subunits, thus enhancing the availability of 30S subunits on which protein synthesis initiation begins. In Aromatoleum aromaticum (strain DSM 19018 / LMG 30748 / EbN1) (Azoarcus sp. (strain EbN1)), this protein is Translation initiation factor IF-3.